A 476-amino-acid chain; its full sequence is Aspartyl/glutamyl-tRNA(Asn/Gln) amidotransferase subunit B (476 aa).

This sequence belongs to the GatB/GatE family. GatB subfamily. Heterotrimer of A, B and C subunits.

The catalysed reaction is L-glutamyl-tRNA(Gln) + L-glutamine + ATP + H2O = L-glutaminyl-tRNA(Gln) + L-glutamate + ADP + phosphate + H(+). The enzyme catalyses L-aspartyl-tRNA(Asn) + L-glutamine + ATP + H2O = L-asparaginyl-tRNA(Asn) + L-glutamate + ADP + phosphate + 2 H(+). In terms of biological role, allows the formation of correctly charged Asn-tRNA(Asn) or Gln-tRNA(Gln) through the transamidation of misacylated Asp-tRNA(Asn) or Glu-tRNA(Gln) in organisms which lack either or both of asparaginyl-tRNA or glutaminyl-tRNA synthetases. The reaction takes place in the presence of glutamine and ATP through an activated phospho-Asp-tRNA(Asn) or phospho-Glu-tRNA(Gln). In Clostridium botulinum (strain Langeland / NCTC 10281 / Type F), this protein is Aspartyl/glutamyl-tRNA(Asn/Gln) amidotransferase subunit B.